Here is a 95-residue protein sequence, read N- to C-terminus: NADH-quinone oxidoreductase subunit 11 (95 aa).

The next 3 helical transmembrane spans lie at 1–21 (MSYLLTSALLFALGVYGVLTR), 25–45 (ILVFLSIELMLNAANLSLVGF), and 59–79 (MVIAVAAAEVAVGLGLIVAIF).

The protein belongs to the complex I subunit 4L family. As to quaternary structure, NDH-1 is composed of 15 different subunits, Nqo1 to Nqo15. The complex has a L-shaped structure, with the hydrophobic arm (subunits Nqo7, Nqo8 and Nqo10 to Nqo14) embedded in the membrane and the hydrophilic peripheral arm (subunits Nqo1 to Nqo6, Nqo9 and Nqo15) protruding into the bacterial cytoplasm. The hydrophilic domain contains all the redox centers.

The protein localises to the cell inner membrane. It carries out the reaction a quinone + NADH + 5 H(+)(in) = a quinol + NAD(+) + 4 H(+)(out). In terms of biological role, NDH-1 shuttles electrons from NADH, via FMN and iron-sulfur (Fe-S) centers, to quinones in the respiratory chain. The immediate electron acceptor for the enzyme in this species is menaquinone. Couples the redox reaction to proton translocation (for every two electrons transferred, four hydrogen ions are translocated across the cytoplasmic membrane), and thus conserves the redox energy in a proton gradient required for the synthesis of ATP. The sequence is that of NADH-quinone oxidoreductase subunit 11 (nqo11) from Thermus thermophilus (strain ATCC 27634 / DSM 579 / HB8).